The sequence spans 407 residues: Bifunctional enzyme IspD/IspF (407 aa).

Residues 1 to 246 (MTEASENASA…SSERTHFPDI (246 aa)) form a 2-C-methyl-D-erythritol 4-phosphate cytidylyltransferase region. The 2-C-methyl-D-erythritol 2,4-cyclodiphosphate synthase stretch occupies residues 247 to 407 (RTGNGYDVHA…SVVFPGEVPE (161 aa)). 2 residues coordinate a divalent metal cation: Asp-253 and His-255. 4-CDP-2-C-methyl-D-erythritol 2-phosphate contacts are provided by residues 253–255 (DVH) and 279–280 (HS). Position 287 (His-287) interacts with a divalent metal cation. Residues 301-303 (DIG), 377-380 (TTNE), Phe-384, and Arg-387 each bind 4-CDP-2-C-methyl-D-erythritol 2-phosphate.

It in the N-terminal section; belongs to the IspD/TarI cytidylyltransferase family. IspD subfamily. The protein in the C-terminal section; belongs to the IspF family. A divalent metal cation is required as a cofactor.

It carries out the reaction 2-C-methyl-D-erythritol 4-phosphate + CTP + H(+) = 4-CDP-2-C-methyl-D-erythritol + diphosphate. The enzyme catalyses 4-CDP-2-C-methyl-D-erythritol 2-phosphate = 2-C-methyl-D-erythritol 2,4-cyclic diphosphate + CMP. The protein operates within isoprenoid biosynthesis; isopentenyl diphosphate biosynthesis via DXP pathway; isopentenyl diphosphate from 1-deoxy-D-xylulose 5-phosphate: step 2/6. It participates in isoprenoid biosynthesis; isopentenyl diphosphate biosynthesis via DXP pathway; isopentenyl diphosphate from 1-deoxy-D-xylulose 5-phosphate: step 4/6. Functionally, bifunctional enzyme that catalyzes the formation of 4-diphosphocytidyl-2-C-methyl-D-erythritol from CTP and 2-C-methyl-D-erythritol 4-phosphate (MEP) (IspD), and catalyzes the conversion of 4-diphosphocytidyl-2-C-methyl-D-erythritol 2-phosphate (CDP-ME2P) to 2-C-methyl-D-erythritol 2,4-cyclodiphosphate (ME-CPP) with a corresponding release of cytidine 5-monophosphate (CMP) (IspF). This Mesorhizobium japonicum (strain LMG 29417 / CECT 9101 / MAFF 303099) (Mesorhizobium loti (strain MAFF 303099)) protein is Bifunctional enzyme IspD/IspF.